A 367-amino-acid chain; its full sequence is Large ribosomal subunit protein mL38 (367 aa).

The transit peptide at 1–29 directs the protein to the mitochondrion; that stretch reads MLRRSIHTTKILQKPNATSHIWSDFTTRP.

This sequence belongs to the phosphatidylethanolamine-binding protein family. Mitochondrion-specific ribosomal protein mL38 subfamily. In terms of assembly, component of the mitochondrial large ribosomal subunit (mt-LSU). Mature yeast 74S mitochondrial ribosomes consist of a small (37S) and a large (54S) subunit. The 37S small subunit contains a 15S ribosomal RNA (15S mt-rRNA) and 34 different proteins. The 54S large subunit contains a 21S rRNA (21S mt-rRNA) and 46 different proteins.

It localises to the mitochondrion. Component of the mitochondrial ribosome (mitoribosome), a dedicated translation machinery responsible for the synthesis of mitochondrial genome-encoded proteins, including at least some of the essential transmembrane subunits of the mitochondrial respiratory chain. The mitoribosomes are attached to the mitochondrial inner membrane and translation products are cotranslationally integrated into the membrane. The chain is Large ribosomal subunit protein mL38 (MRPL35) from Saccharomyces cerevisiae (strain ATCC 204508 / S288c) (Baker's yeast).